A 481-amino-acid polypeptide reads, in one-letter code: MFS transporter eqxG (481 aa).

Positions 1-13 are enriched in low complexity; the sequence is MATTDPAIAAPDD. The segment at 1 to 58 is disordered; the sequence is MATTDPAIAAPDDSQLEAGRENIRANVGDALEKPSSSTGTMVDEPTDPNVVDWDGPHD. N64 carries an N-linked (GlcNAc...) asparagine glycan. Residues 72 to 92 traverse the membrane as a helical segment; it reads LHLVIVSLFTLAANLAATMFA. N106 carries N-linked (GlcNAc...) asparagine glycosylation. 10 consecutive transmembrane segments (helical) span residues 111–131, 146–166, 169–189, 201–221, 276–296, 315–335, 353–373, 380–400, 403–423, and 439–459; these read AMTVSLYVLGFALGPLLLAPL, FVYVVFTIGCAFSTNVAMFLV, IICGCAASGPMSIGGGTVADL, LFTVGPLLGPSGLIGVATVIF, PIVLLISLYTGILFGLIFLLF, GLAYLGLGIGMILGLVLFSVL, LILMKWLGPITPLGLFIYGWT, WIVPIIGTFVVGFGSLFVVIP, IYLVDAFGAEAAASAMAANLL, and LYVSLGLGWGNSVLGFICLLF.

It belongs to the major facilitator superfamily.

Its subcellular location is the cell membrane. Functionally, efflux pump that might be required for efficient secretion of equisetin or other secondary metabolies produced by the equisetin gene cluster. This chain is MFS transporter eqxG, found in Fusarium heterosporum.